The primary structure comprises 1173 residues: DNA-directed RNA polymerase subunit beta (1173 aa).

It belongs to the RNA polymerase beta chain family. As to quaternary structure, the RNAP catalytic core consists of 2 alpha, 1 beta, 1 beta' and 1 omega subunit. When a sigma factor is associated with the core the holoenzyme is formed, which can initiate transcription.

The enzyme catalyses RNA(n) + a ribonucleoside 5'-triphosphate = RNA(n+1) + diphosphate. Functionally, DNA-dependent RNA polymerase catalyzes the transcription of DNA into RNA using the four ribonucleoside triphosphates as substrates. The sequence is that of DNA-directed RNA polymerase subunit beta from Kosmotoga olearia (strain ATCC BAA-1733 / DSM 21960 / TBF 19.5.1).